The following is a 194-amino-acid chain: Ribose 1,5-bisphosphate phosphokinase PhnN (194 aa).

24–31 contributes to the ATP binding site; that stretch reads GPSGAGKD.

The protein belongs to the ribose 1,5-bisphosphokinase family.

The enzyme catalyses alpha-D-ribose 1,5-bisphosphate + ATP = 5-phospho-alpha-D-ribose 1-diphosphate + ADP. The protein operates within metabolic intermediate biosynthesis; 5-phospho-alpha-D-ribose 1-diphosphate biosynthesis; 5-phospho-alpha-D-ribose 1-diphosphate from D-ribose 5-phosphate (route II): step 3/3. Catalyzes the phosphorylation of ribose 1,5-bisphosphate to 5-phospho-D-ribosyl alpha-1-diphosphate (PRPP). This Rhodopseudomonas palustris (strain ATCC BAA-98 / CGA009) protein is Ribose 1,5-bisphosphate phosphokinase PhnN.